The chain runs to 184 residues: ATP synthase subunit delta (184 aa).

Belongs to the ATPase delta chain family. In terms of assembly, F-type ATPases have 2 components, F(1) - the catalytic core - and F(0) - the membrane proton channel. F(1) has five subunits: alpha(3), beta(3), gamma(1), delta(1), epsilon(1). F(0) has three main subunits: a(1), b(2) and c(10-14). The alpha and beta chains form an alternating ring which encloses part of the gamma chain. F(1) is attached to F(0) by a central stalk formed by the gamma and epsilon chains, while a peripheral stalk is formed by the delta and b chains.

Its subcellular location is the cell membrane. In terms of biological role, f(1)F(0) ATP synthase produces ATP from ADP in the presence of a proton or sodium gradient. F-type ATPases consist of two structural domains, F(1) containing the extramembraneous catalytic core and F(0) containing the membrane proton channel, linked together by a central stalk and a peripheral stalk. During catalysis, ATP synthesis in the catalytic domain of F(1) is coupled via a rotary mechanism of the central stalk subunits to proton translocation. This protein is part of the stalk that links CF(0) to CF(1). It either transmits conformational changes from CF(0) to CF(1) or is implicated in proton conduction. The protein is ATP synthase subunit delta of Rickettsia africae (strain ESF-5).